The chain runs to 712 residues: 1,4-alpha-glucan branching enzyme GlgB (712 aa).

Asp-397 (nucleophile) is an active-site residue. The active-site Proton donor is Glu-450.

It belongs to the glycosyl hydrolase 13 family. GlgB subfamily. As to quaternary structure, monomer.

The catalysed reaction is Transfers a segment of a (1-&gt;4)-alpha-D-glucan chain to a primary hydroxy group in a similar glucan chain.. It participates in glycan biosynthesis; glycogen biosynthesis. In terms of biological role, catalyzes the formation of the alpha-1,6-glucosidic linkages in glycogen by scission of a 1,4-alpha-linked oligosaccharide from growing alpha-1,4-glucan chains and the subsequent attachment of the oligosaccharide to the alpha-1,6 position. The sequence is that of 1,4-alpha-glucan branching enzyme GlgB from Bradyrhizobium sp. (strain BTAi1 / ATCC BAA-1182).